We begin with the raw amino-acid sequence, 209 residues long: ATP-dependent Clp protease proteolytic subunit (209 aa).

S101 functions as the Nucleophile in the catalytic mechanism. H126 is an active-site residue.

It belongs to the peptidase S14 family. Component of the chloroplastic Clp protease core complex.

The protein localises to the plastid. The protein resides in the chloroplast stroma. It catalyses the reaction Hydrolysis of proteins to small peptides in the presence of ATP and magnesium. alpha-casein is the usual test substrate. In the absence of ATP, only oligopeptides shorter than five residues are hydrolyzed (such as succinyl-Leu-Tyr-|-NHMec, and Leu-Tyr-Leu-|-Tyr-Trp, in which cleavage of the -Tyr-|-Leu- and -Tyr-|-Trp bonds also occurs).. Functionally, cleaves peptides in various proteins in a process that requires ATP hydrolysis. Has a chymotrypsin-like activity. Plays a major role in the degradation of misfolded proteins. This is ATP-dependent Clp protease proteolytic subunit from Huperzia lucidula (Shining clubmoss).